The following is a 358-amino-acid chain: Anhydro-N-acetylmuramic acid kinase (358 aa).

9–16 (GTSLDGVD) contacts ATP.

It belongs to the anhydro-N-acetylmuramic acid kinase family.

The enzyme catalyses 1,6-anhydro-N-acetyl-beta-muramate + ATP + H2O = N-acetyl-D-muramate 6-phosphate + ADP + H(+). The protein operates within amino-sugar metabolism; 1,6-anhydro-N-acetylmuramate degradation. Its pathway is cell wall biogenesis; peptidoglycan recycling. Its function is as follows. Catalyzes the specific phosphorylation of 1,6-anhydro-N-acetylmuramic acid (anhMurNAc) with the simultaneous cleavage of the 1,6-anhydro ring, generating MurNAc-6-P. Is required for the utilization of anhMurNAc either imported from the medium or derived from its own cell wall murein, and thus plays a role in cell wall recycling. The sequence is that of Anhydro-N-acetylmuramic acid kinase from Acidiphilium cryptum (strain JF-5).